Consider the following 201-residue polypeptide: MQTSPLLTQLMEALRCLPGVGPKSAQRMAFTLLQRDRSGGMRLAQALTRAMSEIGHCADCRTFTEQEVCNICSNPRRQENGQICVVESPADIYAIEQTGQFSGRYFVLMGHLSPLDGIGPDDIGLDRLEQRLAEEKITEVILATNPTVEGEATANYIAELCAQYGVEASRIAHGVPVGGELEMVDGTTLSHSLAGRHKIRF.

The C4-type zinc-finger motif lies at 57-72 (CADCRTFTEQEVCNIC). The region spanning 81 to 176 (GQICVVESPA…EASRIAHGVP (96 aa)) is the Toprim domain.

This sequence belongs to the RecR family.

Its function is as follows. May play a role in DNA repair. It seems to be involved in an RecBC-independent recombinational process of DNA repair. It may act with RecF and RecO. This Escherichia coli O17:K52:H18 (strain UMN026 / ExPEC) protein is Recombination protein RecR.